The primary structure comprises 123 residues: Holo-[acyl-carrier-protein] synthase (123 aa).

Asp-9 and Glu-57 together coordinate Mg(2+).

The protein belongs to the P-Pant transferase superfamily. AcpS family. Mg(2+) is required as a cofactor.

It localises to the cytoplasm. It carries out the reaction apo-[ACP] + CoA = holo-[ACP] + adenosine 3',5'-bisphosphate + H(+). Transfers the 4'-phosphopantetheine moiety from coenzyme A to a Ser of acyl-carrier-protein. The polypeptide is Holo-[acyl-carrier-protein] synthase (Streptomyces coelicolor (strain ATCC BAA-471 / A3(2) / M145)).